Reading from the N-terminus, the 454-residue chain is UPF0210 protein BL1209 (454 aa).

Belongs to the UPF0210 family. Homodimer.

The sequence is that of UPF0210 protein BL1209 from Bifidobacterium longum (strain NCC 2705).